The chain runs to 297 residues: MTNVNRRPDWIKVKAPNSAEYYNTKDLIKNLRLNTVCEEAACPNIGECWSRKHATVMILGSVCTRACRFCNVKTGRPDLLDPHEPRRLAEAVQKLNLNHVVITSVDRDDLEDGGASHFAECINEIRRSSPNTTIEILTPDFLRKAGAVEVIANSKPDVFNHNVETVPSLYKTIRPGARYYNSLSLLHNIKKLSPEIFTKSGMMVGLGEEINEVVQVMDDLREANVDFLTIGQYLQPTKSHAEVIKYVTPEEFKYLERIAKTKGFLMVSATPLTRSSYHADKDFQKLKENYNIRLASM.

[4Fe-4S] cluster is bound by residues Cys37, Cys42, Cys48, Cys63, Cys67, Cys70, and Ser276. A Radical SAM core domain is found at 49–265; it reads WSRKHATVMI…ERIAKTKGFL (217 aa).

It belongs to the radical SAM superfamily. Lipoyl synthase family. It depends on [4Fe-4S] cluster as a cofactor.

The protein localises to the cytoplasm. The catalysed reaction is [[Fe-S] cluster scaffold protein carrying a second [4Fe-4S](2+) cluster] + N(6)-octanoyl-L-lysyl-[protein] + 2 oxidized [2Fe-2S]-[ferredoxin] + 2 S-adenosyl-L-methionine + 4 H(+) = [[Fe-S] cluster scaffold protein] + N(6)-[(R)-dihydrolipoyl]-L-lysyl-[protein] + 4 Fe(3+) + 2 hydrogen sulfide + 2 5'-deoxyadenosine + 2 L-methionine + 2 reduced [2Fe-2S]-[ferredoxin]. The protein operates within protein modification; protein lipoylation via endogenous pathway; protein N(6)-(lipoyl)lysine from octanoyl-[acyl-carrier-protein]: step 2/2. In terms of biological role, catalyzes the radical-mediated insertion of two sulfur atoms into the C-6 and C-8 positions of the octanoyl moiety bound to the lipoyl domains of lipoate-dependent enzymes, thereby converting the octanoylated domains into lipoylated derivatives. The polypeptide is Lipoyl synthase (Rickettsia typhi (strain ATCC VR-144 / Wilmington)).